Here is a 1863-residue protein sequence, read N- to C-terminus: E3 ubiquitin-protein ligase ubr3 (1863 aa).

The UBR-type zinc-finger motif lies at 80-151; the sequence is TLCGLVWTAN…ESGFCNRHRL (72 aa). 3 disordered regions span residues 302 to 330, 970 to 995, and 1128 to 1152; these read LDDS…SSTK, PEVE…SATF, and IPPK…RARE. 2 stretches are compositionally biased toward basic and acidic residues: residues 971 to 984 and 1134 to 1152; these read EVER…ERET and SPGD…RARE. An RING-type; degenerate zinc finger spans residues 1270–1328; it reads DSSCLQSVSIGWDGGVYVQTCGHTLHIDCHKSYMESLRNDQVLQGISVDKGEFTCPLCR.

It belongs to the E3 ubiquitin-protein ligase UBR1-like family.

The catalysed reaction is S-ubiquitinyl-[E2 ubiquitin-conjugating enzyme]-L-cysteine + [acceptor protein]-L-lysine = [E2 ubiquitin-conjugating enzyme]-L-cysteine + N(6)-ubiquitinyl-[acceptor protein]-L-lysine.. It participates in protein modification; protein ubiquitination. Its function is as follows. E3 ubiquitin-protein ligase which is a component of the N-end rule pathway. Recognizes and binds to proteins bearing specific N-terminal residues, leading to their ubiquitination and subsequent degradation. Positively regulates hedgehog/shh-signaling pathways that function in eye development, neuronal specification and somite development. Activation of shh up-regulates transcription of ubr3, which in turn promotes hedgehog/shh signaling possibly by controlling negative regulators such as Kif7. This is E3 ubiquitin-protein ligase ubr3 from Danio rerio (Zebrafish).